Reading from the N-terminus, the 587-residue chain is MDLPGDSSTPGRQRLCRQPHAGALWGAKSPKRPKLQPLGAPSPLEKASRRVLAVVLEDVMAARMVPLEPQEESSTPRHHSNHRDSVRSQPPASPPRQAMWSPQARPPDPLHLCREPLSRIRRPPSTPRRQSRTTPGPDEGPSQKVDQVHQPTLVVMLQDIASSRPRAEGFADEAPNFIIPARRAEPKVMVHQPKPPSRDLPAPSRPSALSANPLASPPPAPDPVLEPPSTPPPSSLLRPRLSPWGLAPLFHSVRSKLESFADIFLTPNKAPRPPPPSPPMKLELKIAISEAGQPGASEGTVTVSPRPPIRQWRAQDQNPSATLTKPSLGRSHSCPDLGPPGPDPCSWPPVPAPSSRPRPRRHTVGGGEMAKAPPPPRPCLRKEVFPLGGVGASPPLVTSCSSTASTSSFSEPAEPRLSSTKRKEPRAPEDQVLPDSETKTIGKVSRFRIRRTPARSQINLTPMGLPRPVRLNKKEFSLEEIYTNKNYQSPTTRRTFETIFEEPRERNGTLIFTSSRKLRRTVEFRDSSLPRSRRPSRGARATAGRTLPPSLAPSPDVEPLLQQRLQELDASLLEEEEEGDQDQPHRT.

Position 1 is an N-acetylmethionine (Met1). Over residues 1-11 (MDLPGDSSTPG) the composition is skewed to polar residues. 3 disordered regions span residues 1–48 (MDLP…EKAS), 65–152 (VPLE…HQPT), and 181–241 (ARRA…RPRL). The interval 1 to 135 (MDLPGDSSTP…TPRRQSRTTP (135 aa)) is sufficient for heterochromatin association in interphase and chromatin association in anaphase. The segment at 85–378 (SVRSQPPASP…MAKAPPPPRP (294 aa)) is required for the interaction with GRB2 and sufficient to promote the phosphorylation of AKT and cell proliferation. Positions 136-365 (GPDEGPSQKV…RPRPRRHTVG (230 aa)) are required for nuclear lamina association. Low complexity predominate over residues 200–214 (LPAPSRPSALSANPL). The span at 215-234 (ASPPPAPDPVLEPPSTPPPS) shows a compositional bias: pro residues. Ser277 is modified (phosphoserine). Disordered stretches follow at residues 290-444 (EAGQ…IGKV) and 524-587 (FRDS…PHRT). Residues 314–325 (AQDQNPSATLTK) are compositionally biased toward polar residues. Residues 337–356 (LGPPGPDPCSWPPVPAPSSR) show a composition bias toward pro residues. Residues 398–410 (TSCSSTASTSSFS) are compositionally biased toward low complexity. Residues 519–536 (RRTVEFRDSSLPRSRRPS) form a required for nuclear localization region. Low complexity predominate over residues 538–548 (GARATAGRTLP). Residues 572–581 (LLEEEEEGDQ) show a composition bias toward acidic residues.

In terms of assembly, interacts (via proline-rich region) with GRB2 (via SH3 domain 2). Interacts (via N-terminus) with CBX5.

Its subcellular location is the chromosome. It localises to the nucleus. The protein localises to the nucleus lamina. It is found in the nucleoplasm. Functionally, functions in tethering peripheral heterochromatin to the nuclear lamina during interphase, possibly through the interaction with heterochromatin protein CBX5/HP1 alpha. Might play a role in reattaching heterochromatin to the nuclear lamina at mitotic exit. Promotes myoblast differentiation during skeletal myogenesis, possibly by stimulating transcription factor MyoD activity via binding to CBX5/HP1 alpha. Involved in the positive regulation of the PI3K-Akt-mTOR signaling pathway and in promoting cell proliferation, possibly via binding to GRB2. The sequence is that of Proline-rich protein 14 (PRR14) from Bos taurus (Bovine).